The chain runs to 117 residues: Large ribosomal subunit protein eL30B (117 aa).

A compositionally biased stretch (low complexity) spans 1 to 14; the sequence is MSAAPTTAPVAAVS. The tract at residues 1–22 is disordered; it reads MSAAPTTAPVAAVSKKGKKSGD.

The protein belongs to the eukaryotic ribosomal protein eL30 family. In terms of assembly, component of the large ribosomal subunit (LSU). Mature yeast ribosomes consist of a small (40S) and a large (60S) subunit. The 40S small subunit contains 1 molecule of ribosomal RNA (18S rRNA) and at least 33 different proteins. The large 60S subunit contains 3 rRNA molecules (25S, 5.8S and 5S rRNA) and at least 46 different proteins.

It is found in the cytoplasm. Functionally, component of the ribosome, a large ribonucleoprotein complex responsible for the synthesis of proteins in the cell. The small ribosomal subunit (SSU) binds messenger RNAs (mRNAs) and translates the encoded message by selecting cognate aminoacyl-transfer RNA (tRNA) molecules. The large subunit (LSU) contains the ribosomal catalytic site termed the peptidyl transferase center (PTC), which catalyzes the formation of peptide bonds, thereby polymerizing the amino acids delivered by tRNAs into a polypeptide chain. The nascent polypeptides leave the ribosome through a tunnel in the LSU and interact with protein factors that function in enzymatic processing, targeting, and the membrane insertion of nascent chains at the exit of the ribosomal tunnel. This Schizosaccharomyces pombe (strain 972 / ATCC 24843) (Fission yeast) protein is Large ribosomal subunit protein eL30B (rpl3002).